The primary structure comprises 47 residues: Delta-ctenitoxin-Pr2d (47 aa).

5 disulfide bridges follow: C3–C17, C10–C23, C14–C46, C16–C31, and C25–C29.

Expressed by the venom gland.

It is found in the secreted. Functionally, blocks voltage-gated sodium channels (Nav). Causes rapid general spastic paralysis and death when injected in mice at dose levels of less than 2 ug per mouse. This chain is Delta-ctenitoxin-Pr2d, found in Phoneutria reidyi (Brazilian Amazonian armed spider).